The sequence spans 419 residues: Sphingomyelin phosphodiesterase 2 (419 aa).

Residue E49 coordinates Mg(2+). H272 (proton acceptor) is an active-site residue. Helical transmembrane passes span 326–346 and 354–374; these read FSGY…VLAA and AIIL…VYLF.

Belongs to the neutral sphingomyelinase family. Mg(2+) is required as a cofactor. As to expression, although widely expressed in all tissues examined, except the spleen, high enzymatic activity occurs only in the brain.

The protein resides in the cell membrane. It carries out the reaction a sphingomyelin + H2O = phosphocholine + an N-acylsphing-4-enine + H(+). The catalysed reaction is an N-(acyl)-sphingosylphosphocholine + H2O = an N-acyl-sphingoid base + phosphocholine + H(+). The enzyme catalyses 1-O-octadecyl-sn-glycero-3-phosphocholine + H2O = 1-O-octadecyl-sn-glycerol + phosphocholine + H(+). It catalyses the reaction 1-hexadecanoyl-sn-glycero-3-phosphocholine + H2O = 1-hexadecanoyl-sn-glycerol + phosphocholine + H(+). It carries out the reaction a sphingosylphosphocholine + H2O = a sphingoid base + phosphocholine + H(+). The catalysed reaction is 1-O-hexadecyl-sn-glycero-3-phosphocholine + H2O = 1-O-hexadecyl-sn-glycerol + phosphocholine + H(+). It functions in the pathway lipid metabolism; sphingolipid metabolism. With respect to regulation, activated by arachidonic acid. In terms of biological role, catalyzes, at least in vitro, the hydrolysis of sphingomyelin to form ceramide and phosphocholine. Also hydrolyzes 1-O-alkyl-2-lyso-sn-glycero-3-phosphocholine (lyso-platelet-activating factor) in vivo. Also acts on 1-acyl-2-lyso-sn-glycero-3-phosphocholine (lyso-PC) and sphingosylphosphocholine. The protein is Sphingomyelin phosphodiesterase 2 of Mus musculus (Mouse).